An 845-amino-acid chain; its full sequence is ATPase morc-1 (845 aa).

Residues N43, 88–90, and 97–103 each bind ATP; these read SAK and RYGNGLK. Position 43 (N43) interacts with Mg(2+). A coiled-coil region spans residues 284 to 311; that stretch reads AAYNKILDEKNETVKKCEEEKALVMSEI. K422 serves as a coordination point for ATP. 2 disordered regions span residues 566 to 590 and 628 to 739; these read LPQKRLTNSAPSSSDSQNSIRSASS and KMEP…GKAV. Low complexity predominate over residues 574–590; it reads SAPSSSDSQNSIRSASS. Over residues 637–646 the composition is skewed to basic and acidic residues; the sequence is HDSHIAEVQR.

As to quaternary structure, predominantly forms monomers and dimers, but multimerizes to form trimers and tetramers upon DNA binding. As to expression, expressed in germline and somatic cells.

The protein resides in the nucleus. It is found in the nuclear body. It catalyses the reaction ATP + H2O = ADP + phosphate + H(+). Binds non-specifically to DNA and forms static foci which grow by recruiting other morc-1 molecules, and thereby stimulates conformational changes and compaction of DNA, which appears to be enhanced by ATP-binding, but does not require ATP activity. Preferentially binds to long DNAs. Compacts and entraps segments of DNA by sequentially forming loops along the DNA, beginning at the free ends of single- and double-tethered DNA. Does not extrude the DNA loops on compacted double-tethered DNA. Involved in gene silencing. Plays a role in germline RNA interference (RNAi), and in particular, the silencing of endogenous small interfering RNA (endo-siRNA) target genes. May play a role in heterochromatin localization and condensation, and the siRNAi-directed trimethylation of 'Lys-9' of histone H3 in hermaphrodite X chromosomes. Promotes transgenerational epigenetic inheritance and germline immortality. In Caenorhabditis elegans, this protein is ATPase morc-1.